The primary structure comprises 674 residues: Enzymatic polyprotein (674 aa).

The protease stretch occupies residues 40–130; that stretch reads IELHCFVDTG…CQLYEPFIQF (91 aa). The active site involves D47. Residues 267 to 447 enclose the Reverse transcriptase domain; that stretch reads LKVIKPSKSP…KKINFLGLEI (181 aa).

It belongs to the caulimoviridae enzymatic polyprotein family.

The enzyme catalyses DNA(n) + a 2'-deoxyribonucleoside 5'-triphosphate = DNA(n+1) + diphosphate. Functionally, encodes for at least two polypeptides: protease (PR) and reverse transcriptase (RT). The protease processes the polyprotein in cis. Reverse transcriptase is multifunctional enzyme that converts the viral RNA genome into dsDNA in viral cytoplasmic capsids. This enzyme displays a DNA polymerase activity that can copy either DNA or RNA templates, and a ribonuclease H (RNase H) activity that cleaves the RNA strand of RNA-DNA heteroduplexes in a partially processive 3'- to 5'-endonucleasic mode. Neo-synthesized pregenomic RNA (pgRNA) are encapsidated, and reverse-transcribed inside the nucleocapsid. Partial (+)DNA is synthesized from the (-)DNA template and generates the relaxed circular DNA (RC-DNA) genome. After budding and infection, the RC-DNA migrates in the nucleus, and is converted into a plasmid-like covalently closed circular DNA (cccDNA). This Arabidopsis thaliana (Mouse-ear cress) protein is Enzymatic polyprotein.